The chain runs to 391 residues: UPF0229 protein BCG9842_B4751 (391 aa).

Positions 1-16 (MGEENQPNYTISQENW) are enriched in polar residues. Disordered regions lie at residues 1-31 (MGEENQPNYTISQENWSLHRKGYDDQQRHQE) and 80-117 (HVGQGNGDSKVGDVVARDGSGGQKQKGPGKGQGAGDAA). Over residues 21–31 (KGYDDQQRHQE) the composition is skewed to basic and acidic residues. The span at 98–115 (GSGGQKQKGPGKGQGAGD) shows a compositional bias: gly residues.

The protein belongs to the UPF0229 family.

In Bacillus cereus (strain G9842), this protein is UPF0229 protein BCG9842_B4751.